We begin with the raw amino-acid sequence, 88 residues long: Conotoxin MaIr34 (88 aa).

The N-terminal stretch at 1-21 (MKLTCVIVAVLFLTAWTFVMA) is a signal peptide. Residues 22 to 53 (DDPRDGPDTAVRGGKRFWKARNEMNSAASKLN) constitute a propeptide that is removed on maturation. 3 cysteine pairs are disulfide-bonded: Cys-57/Cys-75, Cys-64/Cys-79, and Cys-74/Cys-83.

Belongs to the conotoxin O1 superfamily. In terms of tissue distribution, expressed by the venom duct.

Its subcellular location is the secreted. This is Conotoxin MaIr34 from Conus marmoreus (Marble cone).